The chain runs to 365 residues: Terpene cyclase DEP1 (365 aa).

The next 8 helical transmembrane spans lie at 10–30 (LYLS…NGMF), 82–102 (LLFF…LIES), 116–136 (AWAM…IYLY), 158–178 (LPII…PAWF), 188–208 (ALIA…VGIT), 233–253 (LILA…GALF), 297–317 (LFSQ…AQLL), and 338–358 (MIYL…SFAL).

This sequence belongs to the membrane-bound ascI terpene cyclase family.

It localises to the membrane. Its pathway is polyketide biosynthesis. Functionally, part of the gene cluster that mediates the biosynthesis of depudecin, a highly oxidized eleven-carbon linear polyketide that acts as a histone deacetylase (HDAC) inhibitor and makes a small contribution to pathogenesis. The reducing polyketide synthase DEP5 is the central enzyme in depudecin biosynthesis by yielding the backbone polyketide chain. The monooxygenases DEP2 and DEP4, as well as the uncharacterized protein DEP1, then act as tailoring enzymes to modify the intermediate polyketide chain into depudecin. The sequence is that of Terpene cyclase DEP1 from Fusarium langsethiae.